We begin with the raw amino-acid sequence, 212 residues long: UPF0111 protein PH1389 (212 aa).

This sequence belongs to the UPF0111 family.

The protein is UPF0111 protein PH1389 of Pyrococcus horikoshii (strain ATCC 700860 / DSM 12428 / JCM 9974 / NBRC 100139 / OT-3).